A 168-amino-acid polypeptide reads, in one-letter code: Ecotin (168 aa).

Residues 1-21 form the signal peptide; sequence MKRLSIAITSLLMAASASTIA. A disulfide bridge connects residues Cys-76 and Cys-113.

This sequence belongs to the protease inhibitor I11 (ecotin) family. As to quaternary structure, homodimer.

It is found in the periplasm. Its function is as follows. General inhibitor of pancreatic serine proteases: inhibits chymotrypsin, trypsin, elastases, factor X, kallikrein as well as a variety of other proteases. This Yersinia enterocolitica serotype O:8 / biotype 1B (strain NCTC 13174 / 8081) protein is Ecotin.